Consider the following 186-residue polypeptide: MTQHSPAFVTPDWLEREQLTDTPTPVFFGWLFNQQSLTRRLDRLSDGGFDIVPLSEGWQALRDDECAALGLPAASEGWVREVYLRGNGENWVFARSVAARDALQHGGLHMDELGTRSLGALLFSDPAFDRGTLQVCHYPQSWLPDADAVSGLWARRSQFSRGALSVLVAEVFLPALWNAIHNKDHA.

Substrate is bound by residues arginine 80, leucine 118, and glutamate 170.

Belongs to the UbiC family.

The protein localises to the cytoplasm. It catalyses the reaction chorismate = 4-hydroxybenzoate + pyruvate. Its pathway is cofactor biosynthesis; ubiquinone biosynthesis. Functionally, removes the pyruvyl group from chorismate, with concomitant aromatization of the ring, to provide 4-hydroxybenzoate (4HB) for the ubiquinone pathway. This Pseudomonas syringae pv. tomato (strain ATCC BAA-871 / DC3000) protein is Probable chorismate pyruvate-lyase.